Reading from the N-terminus, the 489-residue chain is Cysteine--tRNA ligase (489 aa).

Residue C29 coordinates Zn(2+). The 'HIGH' region signature appears at 31 to 41 (VTVYDYCHLGH). Residues C215, H240, and E244 each contribute to the Zn(2+) site. The 'KMSKS' region motif lies at 272-276 (KMSKS). ATP is bound at residue K275.

The protein belongs to the class-I aminoacyl-tRNA synthetase family. Monomer. Requires Zn(2+) as cofactor.

Its subcellular location is the cytoplasm. The catalysed reaction is tRNA(Cys) + L-cysteine + ATP = L-cysteinyl-tRNA(Cys) + AMP + diphosphate. This chain is Cysteine--tRNA ligase, found in Trichodesmium erythraeum (strain IMS101).